The chain runs to 218 residues: UPF0173 metal-dependent hydrolase Mpal_1063 (218 aa).

Belongs to the UPF0173 family.

The sequence is that of UPF0173 metal-dependent hydrolase Mpal_1063 from Methanosphaerula palustris (strain ATCC BAA-1556 / DSM 19958 / E1-9c).